The primary structure comprises 241 residues: Nickel import ATP-binding protein LarO (241 aa).

The ABC transporter domain occupies 2–240; sequence IKLVNICYDY…QPARQAQLMT (239 aa). Position 34–41 (34–41) interacts with ATP; the sequence is GPNGSGKS.

Belongs to the ABC transporter superfamily. In terms of assembly, may form an energy-coupling factor (ECF) transporter complex composed of an ATP-binding protein (A component, LarO), a transmembrane protein (T component, LarQ) and a fused possible substrate-capture protein (S component, LarMN) of unknown stoichiometry.

The protein localises to the cell membrane. Its function is as follows. Probable ATP-binding component of the energy-coupling factor (ECF) transporter complex LarMNQO involved in nickel import. LarO is presumably responsible for energy coupling to the transport system. This Lactiplantibacillus plantarum (strain ATCC BAA-793 / NCIMB 8826 / WCFS1) (Lactobacillus plantarum) protein is Nickel import ATP-binding protein LarO.